Here is a 220-residue protein sequence, read N- to C-terminus: Putative cobalt transport protein CbiM (220 aa).

A run of 5 helical transmembrane segments spans residues 6-26 (GFLPPRWAAAWTLAAAPIVVY), 43-63 (ALVAIGIAFVFILSALKFPSV), 74-94 (GLLVVLFGPAVTAFTATIVLL), 98-118 (LLLAHGGITTLGANVVAMGII), and 182-202 (IFTLTQVPIGILEGILAAAVI).

The protein belongs to the CbiM family. Forms an energy-coupling factor (ECF) transporter complex composed of an ATP-binding protein (A component, CbiO), a transmembrane protein (T component, CbiQ) and 2 possible substrate-capture proteins (S components, CbiM and CbiN) of unknown stoichimetry.

It is found in the cell membrane. The protein operates within cofactor biosynthesis; adenosylcobalamin biosynthesis. Functionally, part of the energy-coupling factor (ECF) transporter complex CbiMNOQ involved in cobalt import. The polypeptide is Putative cobalt transport protein CbiM (Haloquadratum walsbyi (strain DSM 16790 / HBSQ001)).